The chain runs to 538 residues: Bifunctional purine biosynthesis protein PurH (538 aa).

The MGS-like domain occupies 6–158 (KHIPAPDLHR…KNHAYVATVV (153 aa)).

It belongs to the PurH family.

The catalysed reaction is (6R)-10-formyltetrahydrofolate + 5-amino-1-(5-phospho-beta-D-ribosyl)imidazole-4-carboxamide = 5-formamido-1-(5-phospho-D-ribosyl)imidazole-4-carboxamide + (6S)-5,6,7,8-tetrahydrofolate. It catalyses the reaction IMP + H2O = 5-formamido-1-(5-phospho-D-ribosyl)imidazole-4-carboxamide. It functions in the pathway purine metabolism; IMP biosynthesis via de novo pathway; 5-formamido-1-(5-phospho-D-ribosyl)imidazole-4-carboxamide from 5-amino-1-(5-phospho-D-ribosyl)imidazole-4-carboxamide (10-formyl THF route): step 1/1. It participates in purine metabolism; IMP biosynthesis via de novo pathway; IMP from 5-formamido-1-(5-phospho-D-ribosyl)imidazole-4-carboxamide: step 1/1. This Brucella melitensis biotype 2 (strain ATCC 23457) protein is Bifunctional purine biosynthesis protein PurH.